The following is a 923-amino-acid chain: Protein dct-6 (923 aa).

Residues 312–347 (DMNDQIEQMISLLVDELSELEKLEQLCKEVERTGNQ) are a coiled coil.

Functionally, may have a role in tumor suppression. The protein is Protein dct-6 (dct-6) of Caenorhabditis elegans.